Reading from the N-terminus, the 241-residue chain is Small ribosomal subunit protein uS2 (241 aa).

Belongs to the universal ribosomal protein uS2 family.

The sequence is that of Small ribosomal subunit protein uS2 from Yersinia enterocolitica serotype O:8 / biotype 1B (strain NCTC 13174 / 8081).